The chain runs to 169 residues: Pyrophosphate-energized proton pump 1 (169 aa).

3 helical membrane-spanning segments follow: residues 45–65, 114–134, and 141–161; these read YVVA…GIAM, VIPS…VLLI, and AFAA…LVAI.

It belongs to the H(+)-translocating pyrophosphatase (TC 3.A.10) family. Homodimer. Mg(2+) serves as cofactor.

It localises to the cell inner membrane. The enzyme catalyses diphosphate + H2O + H(+)(in) = 2 phosphate + 2 H(+)(out). Proton pump that utilizes the energy of pyrophosphate hydrolysis as the driving force for proton movement across the membrane. Generates a proton motive force. This is Pyrophosphate-energized proton pump 1 (hppA1) from Rhizobium leguminosarum bv. trifolii.